The chain runs to 302 residues: Putative gluconeogenesis factor (302 aa).

This sequence belongs to the gluconeogenesis factor family.

It is found in the cytoplasm. In terms of biological role, required for morphogenesis under gluconeogenic growth conditions. The polypeptide is Putative gluconeogenesis factor (ybhK) (Escherichia coli O157:H7).